The primary structure comprises 656 residues: Protein teflon (656 aa).

Residues 33-56 form a C2H2-type 1 zinc finger; sequence LYCHFCRDLFTQLPEFLRHLQSNH. A disordered region spans residues 80-131; it reads DKAHEDAQSAGHNSSSGDSRSLMNSEDSRAIDGSEENSDNSPVKPEQIGKQN. A compositionally biased stretch (polar residues) spans 89 to 104; that stretch reads AGHNSSSGDSRSLMNS. C2H2-type zinc fingers lie at residues 606-628 and 632-655; these read YFCK…LISH and FQCT…RNAH.

The protein belongs to the Teflon family.

It is found in the nucleus. Its subcellular location is the chromosome. In terms of biological role, specifically required in males for proper segregation of autosomal bivalents at meiosis I. Expression is required in the male germ line prior to spermatocyte stage S4. May have a role as a bridging molecule maintaining adhesion to hold autosome bivalents together via heterochromatic connections. This Drosophila sechellia (Fruit fly) protein is Protein teflon.